A 434-amino-acid polypeptide reads, in one-letter code: Protein FAM83A (434 aa).

The DUF1669 stretch occupies residues 1 to 298; sequence MSRSRHLGKI…LYASSKPVMG (298 aa). The interval 76–97 is disordered; it reads REPPCPPDTLGGAEAGPKGLDS. 4 positions are modified to phosphoserine: S301, S327, S348, and S357. The interval 308 to 399 is disordered; it reads VPPGAAPANG…HDGPPAAVYS (92 aa). Composition is skewed to low complexity over residues 320 to 332 and 348 to 357; these read SSSS…RTSS and SVSASSGPCS. The segment covering 358 to 369 has biased composition (pro residues); sequence PAAPHPPPPPRF.

This sequence belongs to the FAM83 family. In terms of assembly, directly interacts (via DUF1669) with casein kinase isoforms CSNK1A1, CSNK1A1L, CSNK1D and CSNK1E. In terms of processing, phosphorylated upon EGFR activation in a breast cancer cell line.

The protein localises to the cytoplasm. Functionally, involved in mitochondrial maintenance during adipogenesis. May be acting by playing a role in the maintenance of normal mitochondrial function. The chain is Protein FAM83A from Homo sapiens (Human).